Here is a 565-residue protein sequence, read N- to C-terminus: MSSQRRNYRFILVVTLFVLASLAVSGRLVYLQVHDHEFLADQGDLRSIRDLPIPVTRGMITDRNGEPLAVSTEVASIWCNPREMAAHLDEVPRLAGALHRPAAALLAQLQANPNKRFLYLERGLSPIEASEVMALGITGVHQIKEYKRFYPSSELTAQLIGLVNIDGRGQEGTELGFNDWLSGKDGVREVAINPRGSLVNSIKVLKTPKASQDVALSIDLRLQFIAYKALEKAVLKFGAHSGSAVLVNPKSGQILAMANFPSYNPNNRASFAPAFMRNRTLTDTFEPGSVIKPFSMSAALASGKFDENSQVSVAPGWMTIDGHTIHDVARRDVLTMTGVLINSSNIGMSKVALQIGPKPILEQLGRVGFGAPLSLGFPGENPGYLPFHEKWSNIATASMSFGYSLAVNTAELAQAYSVFANDGKLVPLSLLRDNPQNQVRQAMDPQIARRIRAMLQTVVEDPKGVVRARVPGYHVAGKSGTARKASGRGYADKSYRSLFVGMAPASDPQLVLAVMIDSPTRIGYFGGLVSAPTFSDIMAGSLRALAIPPDNLQDSPAVADRQHHG.

The chain crosses the membrane as a helical span at residues 10 to 30 (FILVVTLFVLASLAVSGRLVY). Serine 289 (acyl-ester intermediate) is an active-site residue.

It belongs to the transpeptidase family. FtsI subfamily.

The protein localises to the cell inner membrane. It carries out the reaction Preferential cleavage: (Ac)2-L-Lys-D-Ala-|-D-Ala. Also transpeptidation of peptidyl-alanyl moieties that are N-acyl substituents of D-alanine.. Its pathway is cell wall biogenesis; peptidoglycan biosynthesis. Its function is as follows. Catalyzes cross-linking of the peptidoglycan cell wall at the division septum. Binds penicillin. This is Probable peptidoglycan D,D-transpeptidase PbpC from Pseudomonas aeruginosa (strain ATCC 15692 / DSM 22644 / CIP 104116 / JCM 14847 / LMG 12228 / 1C / PRS 101 / PAO1).